Here is a 209-residue protein sequence, read N- to C-terminus: MPKTMGILGKNIGMTRVYGEVGQAIPVTVVQAGPCKVLQVKTNATDGYNAVQVGFENKKSSRVNKAEAGHFAKSDSEGFYFVREFRVVDPATYNVGDMISVDALFKAGDIVDVQGTSKGRGFQGVIKRWGFKGGPGGHGSKHHRAPGSIGCSAYPGRVVKGKKMPGRMGNDTVLKKNVTVVDVRIDENVVLLKGPMPGAKNGLLKIYSK.

It belongs to the universal ribosomal protein uL3 family. As to quaternary structure, part of the 50S ribosomal subunit. Forms a cluster with proteins L14 and L19.

One of the primary rRNA binding proteins, it binds directly near the 3'-end of the 23S rRNA, where it nucleates assembly of the 50S subunit. This is Large ribosomal subunit protein uL3 from Desulfotalea psychrophila (strain LSv54 / DSM 12343).